We begin with the raw amino-acid sequence, 539 residues long: Hydroxylamine reductase (539 aa).

[4Fe-4S] cluster contacts are provided by C3, C6, C15, and C21. Residues H235, E259, C303, C394, C422, C447, E482, and K484 each contribute to the hybrid [4Fe-2O-2S] cluster site. Residue C394 is modified to Cysteine persulfide.

Belongs to the HCP family. The cofactor is [4Fe-4S] cluster. Hybrid [4Fe-2O-2S] cluster serves as cofactor.

It localises to the cytoplasm. It catalyses the reaction A + NH4(+) + H2O = hydroxylamine + AH2 + H(+). Catalyzes the reduction of hydroxylamine to form NH(3) and H(2)O. The polypeptide is Hydroxylamine reductase (Methanocaldococcus jannaschii (strain ATCC 43067 / DSM 2661 / JAL-1 / JCM 10045 / NBRC 100440) (Methanococcus jannaschii)).